The following is a 67-amino-acid chain: Major cold shock protein (67 aa).

One can recognise a CSD domain in the interval 4–63 (GTVKWFNAEKGFGFISTENGQDVFAHFSAIQTSGFKTLEEGQKVAFDVEEGQRGPQAVNI).

Homodimer.

It is found in the cytoplasm. The sequence is that of Major cold shock protein (cspA) from Streptococcus pyogenes serotype M6 (strain ATCC BAA-946 / MGAS10394).